The primary structure comprises 118 residues: Small ribosomal subunit protein uS13 (118 aa).

The tract at residues 91 to 118 (HRRSLPVRGQRTKTNARTRKGPRKPIKA) is disordered.

It belongs to the universal ribosomal protein uS13 family. In terms of assembly, part of the 30S ribosomal subunit. Forms a loose heterodimer with protein S19. Forms two bridges to the 50S subunit in the 70S ribosome.

Functionally, located at the top of the head of the 30S subunit, it contacts several helices of the 16S rRNA. In the 70S ribosome it contacts the 23S rRNA (bridge B1a) and protein L5 of the 50S subunit (bridge B1b), connecting the 2 subunits; these bridges are implicated in subunit movement. Contacts the tRNAs in the A and P-sites. In Francisella tularensis subsp. tularensis (strain FSC 198), this protein is Small ribosomal subunit protein uS13.